The following is a 207-amino-acid chain: Tereporin-Ts1 (207 aa).

The first 11 residues, Val-1–Ser-11, serve as a signal peptide directing secretion. Positions Ser-35 to Arg-54 are N-terminal region. Residues Gly-111, Ser-129, Pro-131, Tyr-164, and Tyr-165 each contribute to the phosphocholine site.

It belongs to the actinoporin family. Conoidea subfamily. In terms of assembly, octamer or nonamer in membranes. Monomer in the soluble state. In terms of tissue distribution, expressed by the venom duct.

It is found in the secreted. The protein localises to the nematocyst. The protein resides in the target cell membrane. Its function is as follows. Pore-forming protein that forms pores of around 1 nm and causes cardiac stimulation and cytolysis. The chain is Tereporin-Ts1 from Terebra subulata (Chocolate spotted auger).